Here is a 279-residue protein sequence, read N- to C-terminus: MSETDTIVKGWHGKLNLVYADRSNSTQLIYNHQQAPLKVQRPFYPEGEKVCHSVILHTAGGVVGGDRLSYNLHLQPNAQALITTAAAGKVYRSDGLQARQTIEIKIDAGACLEWLPQETILFNGAIYRQDLRVELATGANFLGWEITRFGRSARGEKFYQGEWRSHTEIWQQGVPLWIDRQWLPGNDAVFHSPHGLAGQPIVGSLVWLGSPISTEIIEKARNLGNTQGEAGVTSLENGFLCRYRGASTSEVRNWFTSVWQLLRGEFFSRGKCIPRVWQT.

This sequence belongs to the UreD family. UreD, UreF and UreG form a complex that acts as a GTP-hydrolysis-dependent molecular chaperone, activating the urease apoprotein by helping to assemble the nickel containing metallocenter of UreC. The UreE protein probably delivers the nickel.

It localises to the cytoplasm. Its function is as follows. Required for maturation of urease via the functional incorporation of the urease nickel metallocenter. In Nostoc sp. (strain PCC 7120 / SAG 25.82 / UTEX 2576), this protein is Urease accessory protein UreD.